The chain runs to 182 residues: Alpha-S2-casein (182 aa).

An N-terminal signal peptide occupies residues 1–15; sequence MKFFIFTCLLAVALA. S22, S23, and S24 each carry phosphoserine.

The protein belongs to the alpha-casein family. In terms of tissue distribution, mammary gland specific. Secreted in milk.

The protein resides in the secreted. Its function is as follows. Important role in the capacity of milk to transport calcium phosphate. In Oryctolagus cuniculus (Rabbit), this protein is Alpha-S2-casein (CSN1S2).